Here is a 260-residue protein sequence, read N- to C-terminus: UPF0246 protein Bcenmc03_2247 (260 aa).

This sequence belongs to the UPF0246 family.

This is UPF0246 protein Bcenmc03_2247 from Burkholderia orbicola (strain MC0-3).